The chain runs to 410 residues: Putative F-box/kelch-repeat protein At1g15680 (410 aa).

One can recognise an F-box domain in the interval C13–L58. Kelch repeat units lie at residues V177–K227 and A274–V327.

This chain is Putative F-box/kelch-repeat protein At1g15680, found in Arabidopsis thaliana (Mouse-ear cress).